The following is a 1255-amino-acid chain: Pre-mRNA-splicing factor ATP-dependent RNA helicase DEAH7 (1255 aa).

Residues 1 to 316 form a disordered region; it reads MGVDPFKTTE…SDEDRSQGAE (316 aa). A compositionally biased stretch (basic and acidic residues) spans 13 to 60; the sequence is EADKETNGGVPVKDKLTFKAPERKSRLGLDARAIEKKDNAKTEGEFKV. Polar residues predominate over residues 109–137; sequence AQESTVTTENAGTSDISITPRTLSCTSSY. Short sequence motifs (nuclear localization signal) lie at residues 144 to 153 and 172 to 191; these read RHREEHRRDR and RRRESYRQSDRDYHGEKRRR. Positions 144 to 219 are enriched in basic and acidic residues; sequence RHREEHRRDR…EWERSPHGDR (76 aa). Low complexity-rich tracts occupy residues 220–240 and 271–290; these read GSSYSRRPQPSPSPMLAAASP and PIRASGSSIRSSSSRYGGRS. Positions 297–316 are enriched in basic and acidic residues; sequence REGDLTNEGHSDEDRSQGAE. The 164-residue stretch at 568–731 folds into the Helicase ATP-binding domain; the sequence is LQVIRENQVI…FGSVPIFNIP (164 aa). 581 to 588 contributes to the ATP binding site; that stretch reads GETGSGKT. The DEAH box motif lies at 678-681; it reads DEAH. The Helicase C-terminal domain occupies 753-933; it reads AVKQAMTIHI…NVVLLLKSLK (181 aa). Residues 1190 to 1224 are compositionally biased toward basic and acidic residues; that stretch reads LEHKKKQKEEKSGMEEEMEKLRRDQVESELRSKER. A disordered region spans residues 1190-1255; the sequence is LEHKKKQKEE…TFLRPKKLGL (66 aa).

The protein belongs to the DEAD box helicase family. DEAH subfamily. PRP16 sub-subfamily. As to quaternary structure, interacts with the Phytophthora PSR1 protein.

Its subcellular location is the nucleus. The enzyme catalyses ATP + H2O = ADP + phosphate + H(+). In terms of biological role, involved in pre-mRNA splicing by mediating structural transitions of the spliceosome during the catalytic step. Facilitates expression of genes involved in auxin-mediated development including male-gametophyte transmission, apical-basal patterning of embryonic and gynoecium development, stamen development, phyllotactic flower positioning, and vascular development. Also involved in root-meristem maintenance and planar polarity of root-hair positioning. Acts as a component of RNA silencing that regulates distinct classes of endogenous small RNAs. Functions as a positive regulator of plant immunity. The chain is Pre-mRNA-splicing factor ATP-dependent RNA helicase DEAH7 from Arabidopsis thaliana (Mouse-ear cress).